Consider the following 175-residue polypeptide: Ribosome maturation factor RimM (175 aa).

The PRC barrel domain occupies 96–172 (PDTYYDHQLE…LIEIDPPDGL (77 aa)).

Belongs to the RimM family. Binds ribosomal protein uS19.

Its subcellular location is the cytoplasm. In terms of biological role, an accessory protein needed during the final step in the assembly of 30S ribosomal subunit, possibly for assembly of the head region. Essential for efficient processing of 16S rRNA. May be needed both before and after RbfA during the maturation of 16S rRNA. It has affinity for free ribosomal 30S subunits but not for 70S ribosomes. The protein is Ribosome maturation factor RimM of Mycobacterium avium (strain 104).